A 684-amino-acid polypeptide reads, in one-letter code: MRNVVHRGGEFKLESPYGPTGDQPSAIKALTDGVLRGDRWQTLLGVTGSGKTFTVSNVIAQVNRPTLVLSHNKTLAAQLYGELKQFFPHNAVEYFISYYDFYQPEAYIPSLDKYIAKDLKINDEIERLRLRATSALLSGRNDVIVVSSVSCIYGLGSPEDWMAQIVELRQGMELDRDEFLQRLVALHYFRDDVDLSPGRFRVRGDVIDLVPGHEELALRIEFFGSEIDSIHTFDPKSGEIIGRDEYAFIYPARQFVADSEKLEVAMLAIENELAERLNALRAEEKLVEAQRLEERTRYDLEMMKELGYCSGIENYARHIAGRKPGERPWCLLDYFPEDFLVVVDESHVTLPQIRGMYGGDRSRKTVLVEHGFRLPSALDNRPLRFEEFEEMVPQVICVSATPSAHELMRSGGVVVEQLIRPTGLLDPQIEVHPVAGQIDHLLARIRERIAKGQKSLVLTLTKRMSEDLHAYFRKLGLRSQYLHSEIKSLERMQILRELRAGDIEVLVGVNLLREGLDLPEVALVAILDADKEGFLRDATSLMQIAGRAARNVEGLVLFYADKITDSMREVLDETERRRRIQREYNEKHGIEPRSIIKSVDQVLNTTSVADAEERYRRKRLGLQKRPELELRGVLDSMSRSDVMLMVAEMNAEMQKAAEQTDYEKAAYLRDEILMLQERIEQMTE.

One can recognise a Helicase ATP-binding domain in the interval Asp-32–Arg-420. Gly-45–Thr-52 contributes to the ATP binding site. The Beta-hairpin motif lies at Tyr-98–Ile-121. Residues Gln-437–Leu-603 enclose the Helicase C-terminal domain. The region spanning Met-643–Arg-678 is the UVR domain.

It belongs to the UvrB family. As to quaternary structure, forms a heterotetramer with UvrA during the search for lesions. Interacts with UvrC in an incision complex.

It localises to the cytoplasm. Functionally, the UvrABC repair system catalyzes the recognition and processing of DNA lesions. A damage recognition complex composed of 2 UvrA and 2 UvrB subunits scans DNA for abnormalities. Upon binding of the UvrA(2)B(2) complex to a putative damaged site, the DNA wraps around one UvrB monomer. DNA wrap is dependent on ATP binding by UvrB and probably causes local melting of the DNA helix, facilitating insertion of UvrB beta-hairpin between the DNA strands. Then UvrB probes one DNA strand for the presence of a lesion. If a lesion is found the UvrA subunits dissociate and the UvrB-DNA preincision complex is formed. This complex is subsequently bound by UvrC and the second UvrB is released. If no lesion is found, the DNA wraps around the other UvrB subunit that will check the other stand for damage. This chain is UvrABC system protein B, found in Chlorobaculum tepidum (strain ATCC 49652 / DSM 12025 / NBRC 103806 / TLS) (Chlorobium tepidum).